We begin with the raw amino-acid sequence, 603 residues long: MTDVPVSRIRNFSIIAHIDHGKSTLADRLLQTTGTVADREMKEQFLDNMELERERGITIKLQAARMAYQASDKEDYVLNLIDTPGHVDFSYEVSRSLAACEGALLVVDASQGVEAQTLANVYLAIEHDLEIIPVLNKIDLPGAEPDRVKQEIEEIVGLDCSGAILASAKTGIGIAEILESIVHLVPPPEDTTQEPLRALIFDSYYDLYRGVVVYFRVMDGTVKKGDRVRLMASGKEYDVDELGVLSPTQVQVDELHAGEVGYFAAAIKAVEDARVGDTITLAKAQAAEPLPGYVEAKPMVFCGMFPTDADQFPDLRDALERLKLNDAALNYEPETSSAMGFGFRCGFLGLLHMEIVQERLEREYNLDLIITAPSVVYRITTLKGETLLIDNPSSLPDPQHREKIEEPFVQVDMITPEEYVGTLMELGQSRRGTFKDMKYLTPGRTTLVYELPLAEVVTDFFDQMKSRSRGYASMEYHLIGYRENPLVKLDILINADPVDSLAAIVHRDKAYYTGRALVSKLRELIPRHQFKIPIQAAIGAKVIASESIPALRKDVLAKCYGGDVSRKRKLLEKQKAGKKRMKSVGRVDVPQEAFMAVLRITDE.

The 183-residue stretch at 7 to 189 (SRIRNFSIIA…SIVHLVPPPE (183 aa)) folds into the tr-type G domain. Residues 19–24 (DHGKST) and 136–139 (NKID) each bind GTP.

It belongs to the TRAFAC class translation factor GTPase superfamily. Classic translation factor GTPase family. LepA subfamily.

It is found in the cell inner membrane. The catalysed reaction is GTP + H2O = GDP + phosphate + H(+). Required for accurate and efficient protein synthesis under certain stress conditions. May act as a fidelity factor of the translation reaction, by catalyzing a one-codon backward translocation of tRNAs on improperly translocated ribosomes. Back-translocation proceeds from a post-translocation (POST) complex to a pre-translocation (PRE) complex, thus giving elongation factor G a second chance to translocate the tRNAs correctly. Binds to ribosomes in a GTP-dependent manner. This Acaryochloris marina (strain MBIC 11017) protein is Elongation factor 4.